Consider the following 261-residue polypeptide: Putative cysteine protease YopT-like y4zC (261 aa).

Residues 1–15 show a composition bias toward polar residues; that stretch reads MHSPISGSFTSSTQV. Disordered regions lie at residues 1–48 and 54–73; these read MHSP…CPDK and SKPQASDPNNPSTSSPARPS. The span at 61–73 shows a compositional bias: low complexity; sequence PNNPSTSSPARPS. Active-site residues include cysteine 93, histidine 205, and aspartate 220.

Belongs to the peptidase C58 family.

In terms of biological role, potential cysteine protease, which may play a central role after invasion of host cell. The polypeptide is Putative cysteine protease YopT-like y4zC (Sinorhizobium fredii (strain NBRC 101917 / NGR234)).